The primary structure comprises 165 residues: Probable chemoreceptor glutamine deamidase CheD (165 aa).

This sequence belongs to the CheD family.

The enzyme catalyses L-glutaminyl-[protein] + H2O = L-glutamyl-[protein] + NH4(+). Functionally, probably deamidates glutamine residues to glutamate on methyl-accepting chemotaxis receptors (MCPs), playing an important role in chemotaxis. The sequence is that of Probable chemoreceptor glutamine deamidase CheD from Symbiobacterium thermophilum (strain DSM 24528 / JCM 14929 / IAM 14863 / T).